The chain runs to 260 residues: 3'-5' ssDNA/RNA exonuclease TatD (260 aa).

A divalent metal cation-binding residues include glutamate 92, histidine 128, and histidine 153.

Belongs to the metallo-dependent hydrolases superfamily. TatD-type hydrolase family. TatD subfamily. Monomer. The cofactor is Mg(2+).

It localises to the cytoplasm. Functionally, 3'-5' exonuclease that prefers single-stranded DNA and RNA. May play a role in the H(2)O(2)-induced DNA damage repair. This Edwardsiella piscicida protein is 3'-5' ssDNA/RNA exonuclease TatD.